A 191-amino-acid polypeptide reads, in one-letter code: Fe/S biogenesis protein NfuA (191 aa).

[4Fe-4S] cluster is bound by residues Cys-149 and Cys-152.

It belongs to the NfuA family. In terms of assembly, homodimer. It depends on [4Fe-4S] cluster as a cofactor.

In terms of biological role, involved in iron-sulfur cluster biogenesis. Binds a 4Fe-4S cluster, can transfer this cluster to apoproteins, and thereby intervenes in the maturation of Fe/S proteins. Could also act as a scaffold/chaperone for damaged Fe/S proteins. The polypeptide is Fe/S biogenesis protein NfuA (Edwardsiella ictaluri (strain 93-146)).